A 283-amino-acid polypeptide reads, in one-letter code: MIIDKLYENVEKKGCVCVGLDTDISYLPKGFLNKFTNIEDAIFAFNQRIVDSTFDVSACYKVQIAYYEAMGIKGMILYKKTLEYIRKKGGIVIADIKRGDISATAKMYAKAHFEGDFESDFITLNPYMGMDTLEPYKDYFKNKEKGVFLLLRTSNEGSKDIQYLDLKDNKKVYNKVGEKIENIGKEFLGNCRYSSIGAVVGCTAEENNIRKELKHTFFLIPGYGAQGGKAEVAKYYLSGGNGGIVNSSRGILLAYKKYDEEGKNFEECARNEVINMKKTLQII.

Lysine 97 functions as the Proton donor in the catalytic mechanism.

This sequence belongs to the OMP decarboxylase family. Type 2 subfamily.

The enzyme catalyses orotidine 5'-phosphate + H(+) = UMP + CO2. Its pathway is pyrimidine metabolism; UMP biosynthesis via de novo pathway; UMP from orotate: step 2/2. The polypeptide is Orotidine 5'-phosphate decarboxylase (Clostridium botulinum (strain Kyoto / Type A2)).